A 43-amino-acid chain; its full sequence is Peroxidase (43 aa).

This sequence belongs to the peroxidase family. Classical plant (class III) peroxidase subfamily. The cofactor is Ca(2+). Requires heme b as cofactor.

The enzyme catalyses 2 a phenolic donor + H2O2 = 2 a phenolic radical donor + 2 H2O. In terms of biological role, removal of H(2)O(2), oxidation of toxic reductants, biosynthesis and degradation of lignin, suberization, auxin catabolism, response to environmental stresses such as wounding, pathogen attack and oxidative stress. These functions might be dependent on each isozyme/isoform in each plant tissue. The protein is Peroxidase of Cynara cardunculus var. scolymus (Globe artichoke).